The primary structure comprises 53 residues: UPF0391 membrane protein SG0393 (53 aa).

The next 2 membrane-spanning stretches (helical) occupy residues Trp-4–Ala-24 and Ala-27–Phe-47.

This sequence belongs to the UPF0391 family.

Its subcellular location is the cell membrane. This chain is UPF0391 membrane protein SG0393, found in Sodalis glossinidius (strain morsitans).